An 876-amino-acid polypeptide reads, in one-letter code: Valine--tRNA ligase (876 aa).

Positions 44-54 (PNVTGKLHLGH) match the 'HIGH' region motif. A 'KMSKS' region motif is present at residues 520–524 (KMSKS). K523 is an ATP binding site. The stretch at 805–876 (LEGLIDMDKE…VKARIEQLKA (72 aa)) forms a coiled coil.

The protein belongs to the class-I aminoacyl-tRNA synthetase family. ValS type 1 subfamily. As to quaternary structure, monomer.

The protein resides in the cytoplasm. It carries out the reaction tRNA(Val) + L-valine + ATP = L-valyl-tRNA(Val) + AMP + diphosphate. In terms of biological role, catalyzes the attachment of valine to tRNA(Val). As ValRS can inadvertently accommodate and process structurally similar amino acids such as threonine, to avoid such errors, it has a 'posttransfer' editing activity that hydrolyzes mischarged Thr-tRNA(Val) in a tRNA-dependent manner. The polypeptide is Valine--tRNA ligase (Staphylococcus aureus (strain bovine RF122 / ET3-1)).